A 3263-amino-acid chain; its full sequence is Protein unc-80 (3263 aa).

Disordered regions lie at residues 491–527, 627–666, 939–1010, 1042–1076, 1380–1475, 1633–1660, and 1680–1721; these read KSALTKTTNENRRTDHQRMPSTQKSVSGSTDDELDEG, NDTERRKSSDNCLAPHPTTNSRRSSLNTLSRRGINRSNPS, PTTS…DDGV, DEEISDNENEEGTSNEEAGLPQRRPLRQSSKQVKA, SRQS…RMRA, LRKQTETNSARASIHARQSTAVPRRESA, and MQQE…LPEK. Residues 499-508 are compositionally biased toward basic and acidic residues; the sequence is NENRRTDHQR. Positions 509–519 are enriched in polar residues; the sequence is MPSTQKSVSGS. The span at 644–658 shows a compositional bias: low complexity; sequence TTNSRRSSLNTLSRR. 2 stretches are compositionally biased toward polar residues: residues 956-967 and 981-1005; these read GAQSQKQSNDQA and SGGTTTGNDDSEGDSSPSTPRTVSS. The span at 1042–1055 shows a compositional bias: acidic residues; it reads DEEISDNENEEGTS. Positions 1393 to 1402 are enriched in polar residues; it reads QGSTKSTTYV. Basic residues predominate over residues 1435–1447; it reads HKRKSFRNRKQSK. Composition is skewed to polar residues over residues 1460 to 1469 and 1633 to 1653; these read GSLTSQQSPI and LRKQTETNSARASIHARQSTA. The span at 1680 to 1710 shows a compositional bias: basic and acidic residues; the sequence is MQQEKEKEKEKEKEEKDALKKQSVEQDHSST. 5 helical membrane-spanning segments follow: residues 2088-2108, 2318-2338, 2352-2372, 2953-2973, and 2995-3015; these read AIGMALSICWLLSPNIHGLYF, AFMFADLHLFINVINGIMIMH, YISISIHFNTLFASQGFFLIM, AIYLGLKVLMLTFGKLLAPMW, and AFVDFLLHSNLPISLFILPMI. 2 disordered regions span residues 3078–3166 and 3178–3198; these read YTPT…RTRS and RKSRHVSSAEESSEERGSVEL. A compositionally biased stretch (acidic residues) spans 3124–3135; it reads IPEDPEDSEDVI. Residues 3138–3166 show a composition bias toward polar residues; sequence NSTGQVTSRISKSPSIPLNKTHQSSRTRS.

The protein belongs to the unc-80 family. Expressed in the nervous system. Expressed in both acetylcholine and GABA motor neurons.

Its subcellular location is the membrane. Probable component of the nca-1 sodium channel complex, a cation channel that regulates neuronal activity by transmitting depolarization signals to synapses. Regulates the transition from slow to rapid forms of locomotion. Required for localization of nca-1 along axons and in non-synaptic regions. Contributes to endocytosis defects in synaptojanin mutants. Involved in the control of anasthetic response to halothane. The chain is Protein unc-80 (unc-80) from Caenorhabditis elegans.